The sequence spans 199 residues: Holliday junction branch migration complex subunit RuvA (199 aa).

The tract at residues 1–63 (MIGCLIGEVF…EDAQQLYGFS (63 aa)) is domain I. The tract at residues 64 to 142 (DAQEKTIFRT…TLAQGTSSAA (79 aa)) is domain II. The tract at residues 143-150 (ALPQIQFV) is flexible linker. Residues 150 to 199 (VSNSPVAEAEAALQSLGYKPLEAQKAVAAVKADYTESADIIRAALKSMMK) are domain III.

The protein belongs to the RuvA family. As to quaternary structure, homotetramer. Forms an RuvA(8)-RuvB(12)-Holliday junction (HJ) complex. HJ DNA is sandwiched between 2 RuvA tetramers; dsDNA enters through RuvA and exits via RuvB. An RuvB hexamer assembles on each DNA strand where it exits the tetramer. Each RuvB hexamer is contacted by two RuvA subunits (via domain III) on 2 adjacent RuvB subunits; this complex drives branch migration. In the full resolvosome a probable DNA-RuvA(4)-RuvB(12)-RuvC(2) complex forms which resolves the HJ.

It is found in the cytoplasm. Functionally, the RuvA-RuvB-RuvC complex processes Holliday junction (HJ) DNA during genetic recombination and DNA repair, while the RuvA-RuvB complex plays an important role in the rescue of blocked DNA replication forks via replication fork reversal (RFR). RuvA specifically binds to HJ cruciform DNA, conferring on it an open structure. The RuvB hexamer acts as an ATP-dependent pump, pulling dsDNA into and through the RuvAB complex. HJ branch migration allows RuvC to scan DNA until it finds its consensus sequence, where it cleaves and resolves the cruciform DNA. In Acinetobacter baumannii (strain AB307-0294), this protein is Holliday junction branch migration complex subunit RuvA.